The primary structure comprises 462 residues: Alkaline phosphatase 3 (462 aa).

The first 32 residues, 1-32, serve as a signal peptide directing secretion; that stretch reads MKKFPKKLLPIAVLSSIAFSSLASGSVPEASA. Asp-52 contacts Mg(2+). Asp-52 contacts Zn(2+). The Phosphoserine intermediate role is filled by Ser-101. Positions 154 and 275 each coordinate Mg(2+). Positions 280, 284, 322, 323, and 419 each coordinate Zn(2+).

It belongs to the alkaline phosphatase family. As to quaternary structure, monomer. Mg(2+) is required as a cofactor. Requires Zn(2+) as cofactor.

It carries out the reaction a phosphate monoester + H2O = an alcohol + phosphate. The chain is Alkaline phosphatase 3 (phoB) from Bacillus subtilis (strain 168).